A 407-amino-acid polypeptide reads, in one-letter code: S-adenosylmethionine synthase (407 aa).

Histidine 19 is an ATP binding site. Aspartate 21 is a binding site for Mg(2+). Glutamate 47 provides a ligand contact to K(+). Residues glutamate 60 and glutamine 103 each coordinate L-methionine. Positions glutamine 103 to asparagine 113 are flexible loop. The tract at residues isoleucine 107 to glutamine 134 is disordered. Residues aspartate 178–lysine 180, aspartate 258, arginine 264–lysine 265, alanine 281, and lysine 285 contribute to the ATP site. Aspartate 258 contacts L-methionine. Residue lysine 289 coordinates L-methionine.

The protein belongs to the AdoMet synthase family. As to quaternary structure, homotetramer; dimer of dimers. It depends on Mg(2+) as a cofactor. Requires K(+) as cofactor.

It is found in the cytoplasm. The enzyme catalyses L-methionine + ATP + H2O = S-adenosyl-L-methionine + phosphate + diphosphate. The protein operates within amino-acid biosynthesis; S-adenosyl-L-methionine biosynthesis; S-adenosyl-L-methionine from L-methionine: step 1/1. Catalyzes the formation of S-adenosylmethionine (AdoMet) from methionine and ATP. The overall synthetic reaction is composed of two sequential steps, AdoMet formation and the subsequent tripolyphosphate hydrolysis which occurs prior to release of AdoMet from the enzyme. In Corynebacterium glutamicum (strain ATCC 13032 / DSM 20300 / JCM 1318 / BCRC 11384 / CCUG 27702 / LMG 3730 / NBRC 12168 / NCIMB 10025 / NRRL B-2784 / 534), this protein is S-adenosylmethionine synthase.